A 509-amino-acid chain; its full sequence is ATP synthase subunit alpha (509 aa).

169-176 is an ATP binding site; it reads GDRKTGKT.

Belongs to the ATPase alpha/beta chains family. As to quaternary structure, F-type ATPases have 2 components, CF(1) - the catalytic core - and CF(0) - the membrane proton channel. CF(1) has five subunits: alpha(3), beta(3), gamma(1), delta(1), epsilon(1). CF(0) has three main subunits: a(1), b(2) and c(9-12). The alpha and beta chains form an alternating ring which encloses part of the gamma chain. CF(1) is attached to CF(0) by a central stalk formed by the gamma and epsilon chains, while a peripheral stalk is formed by the delta and b chains.

The protein resides in the cell membrane. The enzyme catalyses ATP + H2O + 4 H(+)(in) = ADP + phosphate + 5 H(+)(out). In terms of biological role, produces ATP from ADP in the presence of a proton gradient across the membrane. The alpha chain is a regulatory subunit. This chain is ATP synthase subunit alpha, found in Limosilactobacillus reuteri (strain DSM 20016) (Lactobacillus reuteri).